A 132-amino-acid chain; its full sequence is ATP synthase epsilon chain (132 aa).

This sequence belongs to the ATPase epsilon chain family. As to quaternary structure, F-type ATPases have 2 components, CF(1) - the catalytic core - and CF(0) - the membrane proton channel. CF(1) has five subunits: alpha(3), beta(3), gamma(1), delta(1), epsilon(1). CF(0) has three main subunits: a, b and c.

The protein resides in the cell inner membrane. Its function is as follows. Produces ATP from ADP in the presence of a proton gradient across the membrane. The sequence is that of ATP synthase epsilon chain from Gloeobacter violaceus (strain ATCC 29082 / PCC 7421).